The following is a 339-amino-acid chain: Uroporphyrinogen decarboxylase (339 aa).

Residues 21-25 (RQAGR), D71, Y146, S201, and H316 contribute to the substrate site.

It belongs to the uroporphyrinogen decarboxylase family. As to quaternary structure, homodimer.

The protein resides in the cytoplasm. It catalyses the reaction uroporphyrinogen III + 4 H(+) = coproporphyrinogen III + 4 CO2. It participates in porphyrin-containing compound metabolism; protoporphyrin-IX biosynthesis; coproporphyrinogen-III from 5-aminolevulinate: step 4/4. Functionally, catalyzes the decarboxylation of four acetate groups of uroporphyrinogen-III to yield coproporphyrinogen-III. In Rickettsia canadensis (strain McKiel), this protein is Uroporphyrinogen decarboxylase.